The primary structure comprises 271 residues: Glutamate racemase (271 aa).

Residues 12–13 and 44–45 contribute to the substrate site; these read DS and YG. Cysteine 75 (proton donor/acceptor) is an active-site residue. Residue 76 to 77 participates in substrate binding; sequence NT. Cysteine 185 serves as the catalytic Proton donor/acceptor. Position 186 to 187 (186 to 187) interacts with substrate; it reads TH.

It belongs to the aspartate/glutamate racemases family.

The catalysed reaction is L-glutamate = D-glutamate. It participates in cell wall biogenesis; peptidoglycan biosynthesis. Functionally, provides the (R)-glutamate required for cell wall biosynthesis. The chain is Glutamate racemase from Methylococcus capsulatus (strain ATCC 33009 / NCIMB 11132 / Bath).